The chain runs to 152 residues: Transcriptional repressor NrdR (152 aa).

Residues 3–34 (CPYCQHPDSDVIDTRKLHNGETIRRRRKCEAC) fold into a zinc finger. Positions 49–139 (ITVVKKNGER…VYRSFADIGK (91 aa)) constitute an ATP-cone domain.

This sequence belongs to the NrdR family. Zn(2+) is required as a cofactor.

In terms of biological role, negatively regulates transcription of bacterial ribonucleotide reductase nrd genes and operons by binding to NrdR-boxes. This Roseiflexus castenholzii (strain DSM 13941 / HLO8) protein is Transcriptional repressor NrdR.